The chain runs to 305 residues: Probable alpha-L-glutamate ligase (305 aa).

Positions 119–301 constitute an ATP-grasp domain; that stretch reads LQVLAAQHIP…IAGLIIDYLL (183 aa). Residues Lys-155, 192-193, Asp-201, and 225-227 each bind ATP; these read DF and RAN. Residues Asp-262, Glu-274, and Asn-276 each contribute to the Mg(2+) site. Mn(2+) is bound by residues Asp-262, Glu-274, and Asn-276.

The protein belongs to the RimK family. The cofactor is Mg(2+). Mn(2+) serves as cofactor.

In Haemophilus ducreyi (strain 35000HP / ATCC 700724), this protein is Probable alpha-L-glutamate ligase.